The following is a 357-amino-acid chain: Inner membrane protein YcfT (357 aa).

Residues 1–12 (MKQKELWINQIK) lie on the Cytoplasmic side of the membrane. A helical membrane pass occupies residues 13–33 (GLCICLVVIYHSVITFYPHLT). Residues 34 to 49 (TFQHPLSEVLSKCWIY) are Periplasmic-facing. A helical transmembrane segment spans residues 50–70 (FNLYLAPFRMPVFFFISGYLI). The Cytoplasmic segment spans residues 71 to 86 (RRYIDSVPWGNCLDKR). The chain crosses the membrane as a helical span at residues 87–107 (IWNIFWVLALWGVVQWLALSA). The Periplasmic segment spans residues 108-135 (LNQWLAPERDLSNASNAAYADSTGEFLH). A helical transmembrane segment spans residues 136–156 (GMITASTSLWYLYALIVYFVV). At 157-162 (CKIFSR) the chain is on the cytoplasmic side. The helical transmembrane segment at 163 to 183 (LALPLFALFVLLSVAVNFVPT) threads the bilayer. Topologically, residues 184–196 (PWWGMNSVIRNLP) are periplasmic. A helical transmembrane segment spans residues 197 to 217 (YYSLGAWFGATIMTCVKEVPL). The Cytoplasmic segment spans residues 218–231 (RRHLLMASLLTVLA). The chain crosses the membrane as a helical span at residues 232–252 (VGAWLFTISLLLSLVSIVVIM). The Periplasmic portion of the chain corresponds to 253 to 310 (KLFYQYEQRFGMRSTSLLNVIGSNTIAIYTTHRILVEIFSLTLLAQMNAARWSPQVEL). A helical membrane pass occupies residues 311-331 (TLLLVYPFVSLFICTVAGLLV). Residues 332–357 (RKLSQRAFSDLLFSPPSLPAAVSYSR) lie on the Cytoplasmic side of the membrane.

Belongs to the acyltransferase 3 family.

It is found in the cell inner membrane. The protein is Inner membrane protein YcfT (ycfT) of Escherichia coli (strain K12).